The chain runs to 145 residues: D-aminoacyl-tRNA deacylase (145 aa).

Positions 137 to 138 (GP) match the Gly-cisPro motif, important for rejection of L-amino acids motif.

It belongs to the DTD family. As to quaternary structure, homodimer.

It is found in the cytoplasm. The catalysed reaction is glycyl-tRNA(Ala) + H2O = tRNA(Ala) + glycine + H(+). It catalyses the reaction a D-aminoacyl-tRNA + H2O = a tRNA + a D-alpha-amino acid + H(+). Its function is as follows. An aminoacyl-tRNA editing enzyme that deacylates mischarged D-aminoacyl-tRNAs. Also deacylates mischarged glycyl-tRNA(Ala), protecting cells against glycine mischarging by AlaRS. Acts via tRNA-based rather than protein-based catalysis; rejects L-amino acids rather than detecting D-amino acids in the active site. By recycling D-aminoacyl-tRNA to D-amino acids and free tRNA molecules, this enzyme counteracts the toxicity associated with the formation of D-aminoacyl-tRNA entities in vivo and helps enforce protein L-homochirality. In Shewanella pealeana (strain ATCC 700345 / ANG-SQ1), this protein is D-aminoacyl-tRNA deacylase.